The chain runs to 260 residues: uncharacterized protein (260 aa).

Residues Met-1–Gly-22 form the signal peptide. Cys-23 carries the N-palmitoyl cysteine lipid modification. Cys-23 carries S-diacylglycerol cysteine lipidation.

This sequence belongs to the staphylococcal tandem lipoprotein family.

Its subcellular location is the cell membrane. This is an uncharacterized protein from Staphylococcus aureus (strain MRSA252).